Here is a 214-residue protein sequence, read N- to C-terminus: Superoxide dismutase [Mn] (214 aa).

Positions 27, 82, 169, and 173 each coordinate Mn(2+).

The protein belongs to the iron/manganese superoxide dismutase family. Homodimer. It depends on Mn(2+) as a cofactor.

The enzyme catalyses 2 superoxide + 2 H(+) = H2O2 + O2. Destroys superoxide anion radicals which are normally produced within the cells and which are toxic to biological systems. The sequence is that of Superoxide dismutase [Mn] (sodA) from Pasteurella multocida (strain Pm70).